The sequence spans 364 residues: MKMTFRWYGENVDPIPLRYIRQIPGVEGIVWALHDIPAGECWTVERIEEVKAQAAKYNFNTDVVESVNVHEDIKLGLPSRKKYIENYKNTLKNLGRAGVKVVCYNFMPVFDWTRTDLYKPQSDGSTALFYEKAKVDNINPVKFLEQMSKQEGLLTMPGWEPERLSKIKELFEAYKEIKDDDLWENLKYFLQEIIPVAQESGIKMAIHPDDPPWSIFGLSRIITCRDNIKKFLSLVDNPSNGLTLCSGSLGSCTKNNIAAIVREFGDRIYFAHIRNIRHFKNGDFTETSHKTSDGSLDITEIVKAYHDINYKYYVRPDHGRHIWDEKCRPGYGLYDRSLGIMYIFGLWDAFEKISASKRGQYGVE.

The protein belongs to the mannonate dehydratase family. Requires Fe(2+) as cofactor. The cofactor is Mn(2+).

It catalyses the reaction D-mannonate = 2-dehydro-3-deoxy-D-gluconate + H2O. The protein operates within carbohydrate metabolism; pentose and glucuronate interconversion. Catalyzes the dehydration of D-mannonate. The chain is Mannonate dehydratase from Endomicrobium trichonymphae.